The following is a 589-amino-acid chain: V-type ATP synthase alpha chain (589 aa).

239-246 is a binding site for ATP; it reads GPFGAGKT.

This sequence belongs to the ATPase alpha/beta chains family.

The enzyme catalyses ATP + H2O + 4 H(+)(in) = ADP + phosphate + 5 H(+)(out). Produces ATP from ADP in the presence of a proton gradient across the membrane. The V-type alpha chain is a catalytic subunit. This Treponema denticola (strain ATCC 35405 / DSM 14222 / CIP 103919 / JCM 8153 / KCTC 15104) protein is V-type ATP synthase alpha chain.